A 455-amino-acid chain; its full sequence is Serine--tRNA ligase (455 aa).

252-254 is an L-serine binding site; that stretch reads TAE. ATP is bound by residues 283-285 and valine 299; that span reads RKE. L-serine is bound at residue glutamate 306. 370-373 is an ATP binding site; it reads EVVS. An L-serine-binding site is contributed by threonine 406.

This sequence belongs to the class-II aminoacyl-tRNA synthetase family. Type-1 seryl-tRNA synthetase subfamily. As to quaternary structure, homodimer. The tRNA molecule binds across the dimer.

The protein resides in the cytoplasm. The enzyme catalyses tRNA(Ser) + L-serine + ATP = L-seryl-tRNA(Ser) + AMP + diphosphate + H(+). The catalysed reaction is tRNA(Sec) + L-serine + ATP = L-seryl-tRNA(Sec) + AMP + diphosphate + H(+). Its pathway is aminoacyl-tRNA biosynthesis; selenocysteinyl-tRNA(Sec) biosynthesis; L-seryl-tRNA(Sec) from L-serine and tRNA(Sec): step 1/1. In terms of biological role, catalyzes the attachment of serine to tRNA(Ser). Is also able to aminoacylate tRNA(Sec) with serine, to form the misacylated tRNA L-seryl-tRNA(Sec), which will be further converted into selenocysteinyl-tRNA(Sec). In Pyrococcus horikoshii (strain ATCC 700860 / DSM 12428 / JCM 9974 / NBRC 100139 / OT-3), this protein is Serine--tRNA ligase.